Here is a 393-residue protein sequence, read N- to C-terminus: Glycerol-3-phosphate dehydrogenase [NAD(+)] 1 (393 aa).

NAD(+) contacts are provided by residues 45 to 50 (GSGNWG), Phe-133, Lys-157, and Ala-190. Lys-157 lines the substrate pocket. Lys-250 functions as the Proton acceptor in the catalytic mechanism. NAD(+)-binding residues include Arg-316 and Gln-345. Substrate is bound at residue 316 to 317 (RN).

Belongs to the NAD-dependent glycerol-3-phosphate dehydrogenase family.

It carries out the reaction sn-glycerol 3-phosphate + NAD(+) = dihydroxyacetone phosphate + NADH + H(+). The sequence is that of Glycerol-3-phosphate dehydrogenase [NAD(+)] 1 (gpd1) from Cyberlindnera jadinii (Torula yeast).